The following is a 546-amino-acid chain: Chaperonin GroEL 1 (546 aa).

ATP is bound by residues 30–33 (TLGP), Lys51, 87–91 (DGTTT), Gly415, 479–481 (NAA), and Asp495. Residues 526-546 (KEDAPMPGGMPGGMGGMGMDM) form a disordered region. Residues 534-546 (GMPGGMGGMGMDM) show a composition bias toward gly residues.

Belongs to the chaperonin (HSP60) family. As to quaternary structure, forms a cylinder of 14 subunits composed of two heptameric rings stacked back-to-back. Interacts with the co-chaperonin GroES.

It localises to the cytoplasm. The catalysed reaction is ATP + H2O + a folded polypeptide = ADP + phosphate + an unfolded polypeptide.. Functionally, together with its co-chaperonin GroES, plays an essential role in assisting protein folding. The GroEL-GroES system forms a nano-cage that allows encapsulation of the non-native substrate proteins and provides a physical environment optimized to promote and accelerate protein folding. This Burkholderia vietnamiensis (strain G4 / LMG 22486) (Burkholderia cepacia (strain R1808)) protein is Chaperonin GroEL 1.